The sequence spans 622 residues: 1-deoxy-D-xylulose-5-phosphate synthase (622 aa).

Thiamine diphosphate is bound by residues histidine 80 and 121–123 (GHS). A Mg(2+)-binding site is contributed by aspartate 152. Residues 153–154 (GA), asparagine 181, tyrosine 288, and glutamate 370 contribute to the thiamine diphosphate site. Asparagine 181 provides a ligand contact to Mg(2+).

This sequence belongs to the transketolase family. DXPS subfamily. In terms of assembly, homodimer. Mg(2+) serves as cofactor. Thiamine diphosphate is required as a cofactor.

The enzyme catalyses D-glyceraldehyde 3-phosphate + pyruvate + H(+) = 1-deoxy-D-xylulose 5-phosphate + CO2. Its pathway is metabolic intermediate biosynthesis; 1-deoxy-D-xylulose 5-phosphate biosynthesis; 1-deoxy-D-xylulose 5-phosphate from D-glyceraldehyde 3-phosphate and pyruvate: step 1/1. In terms of biological role, catalyzes the acyloin condensation reaction between C atoms 2 and 3 of pyruvate and glyceraldehyde 3-phosphate to yield 1-deoxy-D-xylulose-5-phosphate (DXP). This chain is 1-deoxy-D-xylulose-5-phosphate synthase, found in Shewanella loihica (strain ATCC BAA-1088 / PV-4).